The following is a 135-amino-acid chain: D-ribose pyranase (135 aa).

The active-site Proton donor is the His20. Residues Asp28, His102, and 124 to 126 (YSN) each bind substrate.

The protein belongs to the RbsD / FucU family. RbsD subfamily. As to quaternary structure, homodecamer.

Its subcellular location is the cytoplasm. It carries out the reaction beta-D-ribopyranose = beta-D-ribofuranose. Its pathway is carbohydrate metabolism; D-ribose degradation; D-ribose 5-phosphate from beta-D-ribopyranose: step 1/2. Its function is as follows. Catalyzes the interconversion of beta-pyran and beta-furan forms of D-ribose. In Thermotoga petrophila (strain ATCC BAA-488 / DSM 13995 / JCM 10881 / RKU-1), this protein is D-ribose pyranase.